A 422-amino-acid chain; its full sequence is Elongation factor 1-alpha (422 aa).

Positions 5 to 221 (KPHQNLAVIG…NDLPEPQPPT (217 aa)) constitute a tr-type G domain. Positions 14 to 21 (GHVDHGKS) are G1. Residue 14-21 (GHVDHGKS) coordinates GTP. Serine 21 contributes to the Mg(2+) binding site. A G2 region spans residues 70 to 74 (GVTID). The tract at residues 91–94 (DCPG) is G3. Residues 91-95 (DCPGH) and 146-149 (NKMD) contribute to the GTP site. The tract at residues 146 to 149 (NKMD) is G4. The segment at 185–187 (SAF) is G5.

Belongs to the TRAFAC class translation factor GTPase superfamily. Classic translation factor GTPase family. EF-Tu/EF-1A subfamily.

Its subcellular location is the cytoplasm. The enzyme catalyses GTP + H2O = GDP + phosphate + H(+). Its function is as follows. GTP hydrolase that promotes the GTP-dependent binding of aminoacyl-tRNA to the A-site of ribosomes during protein biosynthesis. This is Elongation factor 1-alpha from Natronomonas pharaonis (strain ATCC 35678 / DSM 2160 / CIP 103997 / JCM 8858 / NBRC 14720 / NCIMB 2260 / Gabara) (Halobacterium pharaonis).